A 339-amino-acid polypeptide reads, in one-letter code: MTCTFHAYEQLHAQPEVVAAVHTLLREVEQADGVAALGEAFLKGIDGDHGHQHIVAMTDERVVGVLALDGAVTASVSGENPTAELAVAPDVRRQGVARGMLAAAREDLGLTGPLDTWAHGDLAPARAMAEAANARRTRELHKMAVDASPGSDRGEQFRAGAEDAASKVESQGLTVLTYPEAVERFGEELVDEEWVRVNNEAFAWHPEQGGWDIDQLRSARDTAWFDPNGVLMVWSCGEDEDAAGPRCAGFHWTKIPTEEQEEPEGERAGEVYVVCLADEARGKGLGPAITMLGIGELMKRGVGTVELYVEGDNGPAVATYEGLGFGIVHTDVVYRGELN.

N-acetyltransferase domains lie at 8–174 (YEQL…QGLT) and 176–339 (LTYP…GELN). E39 is a binding site for 1D-myo-inositol 2-(L-cysteinylamino)-2-deoxy-alpha-D-glucopyranoside. 85–87 (LAV) is an acetyl-CoA binding site. 1D-myo-inositol 2-(L-cysteinylamino)-2-deoxy-alpha-D-glucopyranoside contacts are provided by E207, K254, and E270. Acetyl-CoA is bound at residue 274-276 (VCL). 1D-myo-inositol 2-(L-cysteinylamino)-2-deoxy-alpha-D-glucopyranoside is bound at residue Y308.

This sequence belongs to the acetyltransferase family. MshD subfamily. Monomer.

It carries out the reaction 1D-myo-inositol 2-(L-cysteinylamino)-2-deoxy-alpha-D-glucopyranoside + acetyl-CoA = mycothiol + CoA + H(+). Functionally, catalyzes the transfer of acetyl from acetyl-CoA to desacetylmycothiol (Cys-GlcN-Ins) to form mycothiol. The sequence is that of Mycothiol acetyltransferase from Corynebacterium urealyticum (strain ATCC 43042 / DSM 7109).